Consider the following 90-residue polypeptide: Small ribosomal subunit protein bS20 (90 aa).

Residues 1–25 (MANSAQARKRARQAAKANSHNSALR) form a disordered region.

The protein belongs to the bacterial ribosomal protein bS20 family.

Binds directly to 16S ribosomal RNA. The polypeptide is Small ribosomal subunit protein bS20 (Burkholderia multivorans (strain ATCC 17616 / 249)).